Reading from the N-terminus, the 58-residue chain is Single-pass membrane and coiled-coil domain-containing protein 4 homolog (58 aa).

Positions 1-31 form a coiled coil; that stretch reads MRQLKGKVKETRKQKKERKLDNLETQAKIRT. Residues 31 to 51 form a helical membrane-spanning segment; the sequence is TVVLPALGVLAVFLVLFVYLK.

Belongs to the SMCO4 family.

The protein localises to the membrane. This chain is Single-pass membrane and coiled-coil domain-containing protein 4 homolog, found in Drosophila melanogaster (Fruit fly).